Consider the following 408-residue polypeptide: Acetate kinase (408 aa).

N7 contacts Mg(2+). K14 is a binding site for ATP. R91 is a binding site for substrate. Residue D148 is the Proton donor/acceptor of the active site. Residues 208–212, 283–285, and 331–335 each bind ATP; these read HLGNG, DFR, and GIGEN. A Mg(2+)-binding site is contributed by E384.

It belongs to the acetokinase family. As to quaternary structure, homodimer. Requires Mg(2+) as cofactor. Mn(2+) is required as a cofactor.

The protein resides in the cytoplasm. The enzyme catalyses acetate + ATP = acetyl phosphate + ADP. Its pathway is metabolic intermediate biosynthesis; acetyl-CoA biosynthesis; acetyl-CoA from acetate: step 1/2. Catalyzes the formation of acetyl phosphate from acetate and ATP. Can also catalyze the reverse reaction. The polypeptide is Acetate kinase (Methanosarcina acetivorans (strain ATCC 35395 / DSM 2834 / JCM 12185 / C2A)).